Reading from the N-terminus, the 143-residue chain is Transcriptional regulator MraZ (143 aa).

SpoVT-AbrB domains follow at residues 5-47 and 76-119; these read EYNH…SSDE and ASEC…SNVE.

This sequence belongs to the MraZ family. As to quaternary structure, forms oligomers.

The protein localises to the cytoplasm. It is found in the nucleoid. The protein is Transcriptional regulator MraZ of Alkaliphilus oremlandii (strain OhILAs) (Clostridium oremlandii (strain OhILAs)).